A 184-amino-acid polypeptide reads, in one-letter code: GTP cyclohydrolase 1 (184 aa).

Zn(2+) is bound by residues cysteine 75, histidine 78, and cysteine 146.

The protein belongs to the GTP cyclohydrolase I family. In terms of assembly, homomer.

The enzyme catalyses GTP + H2O = 7,8-dihydroneopterin 3'-triphosphate + formate + H(+). It functions in the pathway cofactor biosynthesis; 7,8-dihydroneopterin triphosphate biosynthesis; 7,8-dihydroneopterin triphosphate from GTP: step 1/1. In Streptococcus pneumoniae serotype 19F (strain G54), this protein is GTP cyclohydrolase 1.